The chain runs to 193 residues: ATP-dependent Clp protease proteolytic subunit 1 (193 aa).

Ser-99 serves as the catalytic Nucleophile. His-124 is an active-site residue.

The protein belongs to the peptidase S14 family. Fourteen ClpP subunits assemble into 2 heptameric rings which stack back to back to give a disk-like structure with a central cavity, resembling the structure of eukaryotic proteasomes.

The protein resides in the cytoplasm. It carries out the reaction Hydrolysis of proteins to small peptides in the presence of ATP and magnesium. alpha-casein is the usual test substrate. In the absence of ATP, only oligopeptides shorter than five residues are hydrolyzed (such as succinyl-Leu-Tyr-|-NHMec, and Leu-Tyr-Leu-|-Tyr-Trp, in which cleavage of the -Tyr-|-Leu- and -Tyr-|-Trp bonds also occurs).. In terms of biological role, cleaves peptides in various proteins in a process that requires ATP hydrolysis. Has a chymotrypsin-like activity. Plays a major role in the degradation of misfolded proteins. The sequence is that of ATP-dependent Clp protease proteolytic subunit 1 from Shouchella clausii (strain KSM-K16) (Alkalihalobacillus clausii).